A 334-amino-acid chain; its full sequence is Fructose-1,6-bisphosphatase class 1 (334 aa).

Residues Glu-92, Asp-114, Leu-116, and Asp-117 each coordinate Mg(2+). Substrate contacts are provided by residues 117–120 and Asn-209; that span reads DGSS. A Mg(2+)-binding site is contributed by Glu-281.

It belongs to the FBPase class 1 family. In terms of assembly, homotetramer. The cofactor is Mg(2+).

Its subcellular location is the cytoplasm. The catalysed reaction is beta-D-fructose 1,6-bisphosphate + H2O = beta-D-fructose 6-phosphate + phosphate. The protein operates within carbohydrate biosynthesis; gluconeogenesis. This chain is Fructose-1,6-bisphosphatase class 1, found in Nitrosomonas eutropha (strain DSM 101675 / C91 / Nm57).